Consider the following 612-residue polypeptide: Methionine--tRNA ligase (612 aa).

Residues 12–22 (PYANGPRHIGH) carry the 'HIGH' region motif. 4 residues coordinate Zn(2+): cysteine 144, cysteine 147, cysteine 157, and cysteine 160. The short motif at 350–354 (KFSSS) is the 'KMSKS' region element. Serine 353 contacts ATP. The interval 580 to 612 (IQPGTQLSKPKPLFPKLDPELAETGPEWAPVQK) is disordered.

The protein belongs to the class-I aminoacyl-tRNA synthetase family. MetG type 1 subfamily. Monomer. Zn(2+) is required as a cofactor.

It localises to the cytoplasm. The catalysed reaction is tRNA(Met) + L-methionine + ATP = L-methionyl-tRNA(Met) + AMP + diphosphate. Is required not only for elongation of protein synthesis but also for the initiation of all mRNA translation through initiator tRNA(fMet) aminoacylation. In Corynebacterium jeikeium (strain K411), this protein is Methionine--tRNA ligase.